The chain runs to 500 residues: 4-alpha-glucanotransferase (500 aa).

Belongs to the disproportionating enzyme family.

Its subcellular location is the cytoplasm. The enzyme catalyses Transfers a segment of a (1-&gt;4)-alpha-D-glucan to a new position in an acceptor, which may be glucose or a (1-&gt;4)-alpha-D-glucan.. This Thermus thermophilus protein is 4-alpha-glucanotransferase (malQ).